A 399-amino-acid polypeptide reads, in one-letter code: MVCLKTLSVFLAAFAAADARAVFKTQGHKNSEMIPDNYIVVMKDGVSQDDFKAHISSVASIHSTNKAKRGTNTQGMKREFDIMNWRGYHGHFDRDTLEEILNDSKVDYVEQDQVVRISGLVTQRSAPSWGLGRVSHRQAGSRDYVFDDSAGRGVTIYGVDTGIDINHQDFRGRARWGTNTADRDNADRHGHGTHTASTFAGTAYGIAKNANIVAVKVLGSDGSGSTSGIIAGINYCVQDAQQRGILGKAAMNLSLGGGFSQANNDAVTRAQNAGIFVAVAAGNDNRDARNYSPASAPAVCTVASSTINDSKSSFSNWGPVVDIYAPGSDIIAARPGGGSTTMSGTSMASPHVAGMGAYMIGMGADPRQVCDRLKQLATAAIRNPGSSTTNRLLYNGSGQ.

Residues 1-19 (MVCLKTLSVFLAAFAAADA) form the signal peptide. Positions 20–118 (RAVFKTQGHK…VEQDQVVRIS (99 aa)) are excised as a propeptide. In terms of domain architecture, Inhibitor I9 spans 38 to 117 (YIVVMKDGVS…YVEQDQVVRI (80 aa)). Positions 128–399 (SWGLGRVSHR…NRLLYNGSGQ (272 aa)) constitute a Peptidase S8 domain. Catalysis depends on charge relay system residues Asp-160 and His-191. N-linked (GlcNAc...) asparagine glycosylation is found at Asn-252 and Asn-308. The active-site Charge relay system is Ser-346. Asn-395 is a glycosylation site (N-linked (GlcNAc...) asparagine).

It belongs to the peptidase S8 family.

Its subcellular location is the secreted. Functionally, secreted subtilisin-like serine protease with keratinolytic activity that contributes to pathogenicity. The polypeptide is Subtilisin-like protease 4 (SUB4) (Arthroderma benhamiae (strain ATCC MYA-4681 / CBS 112371) (Trichophyton mentagrophytes)).